A 95-amino-acid polypeptide reads, in one-letter code: MSYTIQAQTRTEIGKGSSRRLRHAGKVPAVIYGAGKEPVSIVFDHKDIINIQTNEDFYTSVVTIVLDGKEVGVRAQAMQRHAFKPMIEHVDFVYA.

This sequence belongs to the bacterial ribosomal protein bL25 family. In terms of assembly, part of the 50S ribosomal subunit; part of the 5S rRNA/L5/L18/L25 subcomplex. Contacts the 5S rRNA. Binds to the 5S rRNA independently of L5 and L18.

Its function is as follows. This is one of the proteins that binds to the 5S RNA in the ribosome where it forms part of the central protuberance. This is Large ribosomal subunit protein bL25 from Shewanella sp. (strain ANA-3).